Consider the following 480-residue polypeptide: Pre-glycoprotein polyprotein GP complex (480 aa).

The N-myristoyl glycine; by host moiety is linked to residue G2. At 2–17 (GQLVSFFQEIPVFFQE) the chain is on the extracellular side. The chain crosses the membrane as a helical span at residues 18-33 (ALNIALAVVTLLAIVK). At 34–58 (GVLNLWKSGLFQLLMFLILAGRSCS) the chain is on the cytoplasmic side. C57 provides a ligand contact to Zn(2+). Over 59–419 (FRIGYHTSFE…QGRTPLTLVD (361 aa)) the chain is Extracellular. 4 disulfides stabilise this stretch: C85–C221, C266–C279, C288–C297, and C351–C372. N88, N174, and N214 each carry an N-linked (GlcNAc...) asparagine; by host glycan. N-linked (GlcNAc...) asparagine; by host glycosylation is found at N352, N360, N377, and N382. The chain crosses the membrane as a helical span at residues 420–440 (LCFWSAVFYTTTLFLHLVGFP). Topologically, residues 441–480 (THRHISGEPCPLPHRLNRHGACNCGRFKRLKKPLVWYKHH) are cytoplasmic. Zn(2+) is bound by residues H442, H444, C450, H454, C462, C464, and H480.

It belongs to the arenaviridae GPC protein family. As to quaternary structure, interacts with glycoprotein G2. Part of the GP complex (GP-C) together with glycoprotein G1 and glycoprotein G2. The GP-complex interacts with protein Z, which interacts with ribonucleocapsid; these interactions may induce virion budding. Homotrimer; disulfide-linked. In pre-fusion state, G1 homotrimers bind G2 homotrimers via ionic interactions. Part of the GP complex (GP-C) together with glycoprotein G2 and the stable signal peptide. The GP-complex interacts with protein Z, which interacts with ribonucleocapsid; these interactions may induce virion budding. In terms of assembly, homotrimer. Interacts with the stable signal peptide. In pre-fusion state, G2 homotrimers bind G1 homotrimers via ionic interactions. Part of the GP complex (GP-C) together with glycoprotein G1 and the stable signal peptide. Acidification in the endosome triggers rearrangements, which ultimately leads to a 6 helix bundle formed by the two heptad repeat domains (HR1 and HR2) in post-fusion state. The GP-complex interacts with protein Z, which interacts with ribonucleocapsid; these interactions may induce virion budding. In terms of processing, specific enzymatic cleavages in vivo yield mature proteins. GP-C polyprotein is cleaved in the endoplasmic reticulum by the host protease MBTPS1. Only cleaved glycoprotein is incorporated into virions. The SSP remains stably associated with the GP complex following cleavage by signal peptidase and plays crucial roles in the trafficking of GP through the secretory pathway. Post-translationally, myristoylation is necessary for GP2-mediated fusion activity.

The protein resides in the virion membrane. Its subcellular location is the host endoplasmic reticulum membrane. The protein localises to the host Golgi apparatus membrane. It localises to the host cell membrane. In terms of biological role, functions as a cleaved signal peptide that is retained as the third component of the GP complex (GP-C). Helps to stabilize the spike complex in its native conformation. The SSP is required for efficient glycoprotein expression, post-translational maturation cleavage of G1 and G2, glycoprotein transport to the cell surface plasma membrane, formation of infectious virus particles, and acid pH-dependent glycoprotein-mediated cell fusion. Functionally, forms the virion spikes together with glycoprotein G2. The glycoprotein spike trimers are connected to the underlying matrix. Interacts with the host receptor leading to virus endocytosis. Forms the virion spikes together with glycoprotein G1. The glycoprotein spike trimers are connected to the underlying matrix. Class I viral fusion protein that directs fusion of viral and host endosomal membranes, leading to delivery of the nucleocapsid into the cytoplasm. Membrane fusion is mediated by irreversible conformational changes induced by acidification. The chain is Pre-glycoprotein polyprotein GP complex from Cupixi mammarenavirus (isolate Rat/Brasil/BeAn 119303/1970) (CPXV).